Reading from the N-terminus, the 311-residue chain is Heme A synthase (311 aa).

Topologically, residues 1–6 (MQRFIK) are cytoplasmic. The chain crosses the membrane as a helical span at residues 7–27 (WLAVITSLDLLIVLLGGALVT). Residues 28 to 62 (KTGSGQGCGKSWPLCNGEFVPSNLSMETIIELSHR) lie on the Extracellular side of the membrane. C35 and C42 form a disulfide bridge. Residue E58 is part of the active site. Residue H61 coordinates heme o. A helical membrane pass occupies residues 63–83 (LTSGSAGILVTLLCILSWKYY). The Cytoplasmic portion of the chain corresponds to 84–91 (KHVRETKT). The chain crosses the membrane as a helical span at residues 92 to 112 (LAILSFVFLVAQALMGAAAVV). Residues 113–121 (WGQMPAVLA) are Extracellular-facing. A helical transmembrane segment spans residues 122-142 (IHFGISLISFASVILLTCLIF). Heme o is bound at residue H123. Over 143 to 159 (EIDQKFDARSLIMDKKM) the chain is Cytoplasmic. The helical transmembrane segment at 160–180 (KFHIYGVTIYSYIVVYTGALV) threads the bilayer. Residues 181-211 (RHERASLACPDFPLCSKNRPMPTQLHEWVQM) are Extracellular-facing. C189 and C195 form a disulfide bridge. A helical transmembrane segment spans residues 212–232 (GHRVAAMLIFAWILYAMILAI). H213 contributes to the heme b binding site. Residues 233–243 (RHYKQQPVVYW) are Cytoplasmic-facing. The chain crosses the membrane as a helical span at residues 244–264 (GWIISFILVTLQAIVGILVVF). Topologically, residues 265 to 271 (TNASLSM) are extracellular. A helical transmembrane segment spans residues 272–292 (ALLHSLFISCLFAVLCYLVML). Position 275 (H275) interacts with heme b. Residues 293–311 (GTRSKVNAKEAASTSKQTK) are Cytoplasmic-facing.

This sequence belongs to the COX15/CtaA family. Type 1 subfamily. As to quaternary structure, interacts with CtaB. It depends on heme b as a cofactor.

The protein resides in the cell membrane. The catalysed reaction is Fe(II)-heme o + 2 A + H2O = Fe(II)-heme a + 2 AH2. It functions in the pathway porphyrin-containing compound metabolism; heme A biosynthesis; heme A from heme O: step 1/1. In terms of biological role, catalyzes the conversion of heme O to heme A by two successive hydroxylations of the methyl group at C8. The first hydroxylation forms heme I, the second hydroxylation results in an unstable dihydroxymethyl group, which spontaneously dehydrates, resulting in the formyl group of heme A. In Bacillus cereus (strain ATCC 10987 / NRS 248), this protein is Heme A synthase.